The following is a 319-amino-acid chain: Malate dehydrogenase (319 aa).

NAD(+) contacts are provided by residues 10–15 (GAGNIG) and D34. Substrate is bound by residues R83 and R89. NAD(+) is bound by residues N96 and 119-121 (ITN). Substrate contacts are provided by N121 and R152. H176 serves as the catalytic Proton acceptor.

Belongs to the LDH/MDH superfamily. MDH type 3 family.

It catalyses the reaction (S)-malate + NAD(+) = oxaloacetate + NADH + H(+). Catalyzes the reversible oxidation of malate to oxaloacetate. The protein is Malate dehydrogenase of Francisella tularensis subsp. holarctica (strain FTNF002-00 / FTA).